The sequence spans 375 residues: AT-rich binding protein (375 aa).

The C2H2-type 1 zinc-finger motif lies at Ile-29–His-52. Residues Asp-110 to Glu-119 are compositionally biased toward basic and acidic residues. Residues Asp-110–Gln-142 are disordered. A compositionally biased stretch (low complexity) spans Gln-121–Gln-142. 2 C2H2-type zinc fingers span residues Tyr-308–His-332 and Phe-338–His-361.

The protein localises to the nucleus. In terms of biological role, may be a transcription factor for genes having (A+T) stretches in their promoter and/or enhancer regions. Binds to AT rich DNA. The polypeptide is AT-rich binding protein (Drosophila pseudoobscura pseudoobscura (Fruit fly)).